A 295-amino-acid polypeptide reads, in one-letter code: 33 kDa chaperonin (295 aa).

2 disulfides stabilise this stretch: Cys-237/Cys-239 and Cys-270/Cys-273.

The protein belongs to the HSP33 family. Post-translationally, under oxidizing conditions two disulfide bonds are formed involving the reactive cysteines. Under reducing conditions zinc is bound to the reactive cysteines and the protein is inactive.

It localises to the cytoplasm. In terms of biological role, redox regulated molecular chaperone. Protects both thermally unfolding and oxidatively damaged proteins from irreversible aggregation. Plays an important role in the bacterial defense system toward oxidative stress. The polypeptide is 33 kDa chaperonin (Symbiobacterium thermophilum (strain DSM 24528 / JCM 14929 / IAM 14863 / T)).